The primary structure comprises 154 residues: Snaclec agglucetin subunit alpha-1 (154 aa).

Residues 1-23 (MGRFIFVSFGLLVVFLSLSGTGA) form the signal peptide. Intrachain disulfides connect Cys-27–Cys-38, Cys-55–Cys-150, and Cys-125–Cys-142. One can recognise a C-type lectin domain in the interval 34–151 (YDQSCYRVFK…CGSEYAFVCK (118 aa)). An N-linked (GlcNAc...) asparagine glycan is attached at Asn-116.

Belongs to the snaclec family. As to quaternary structure, heterotetramer of the subunits alpha-1, alpha-2, beta-1 and beta-2; disulfide-linked. As to expression, expressed by the venom gland.

The protein resides in the secreted. Agglucetin specifically causes platelet aggregation and surface exposure of integrin alpha-IIb/beta-3 with a GPIb-(GP1BA-) dependent manner in washed platelets. It binds to human platelets in a saturable manner, and its binding is specifically blocked by anti-GP Ib mAb. It regulates endothelial cell survival and promotes angiogenesis by activating integrin alpha-v/beta-3 signaling through FAK/phosphatidylinositol 3-kinase (PI3K)/Akt pathway. In Deinagkistrodon acutus (Hundred-pace snake), this protein is Snaclec agglucetin subunit alpha-1.